The primary structure comprises 173 residues: Eggshell protein (173 aa).

The first 18 residues, 1–18 (MKQSLTLVFLVAIGYATA), serve as a signal peptide directing secretion. Over residues 145–162 (GSGKGKGGGKGGKGGKGG) the composition is skewed to gly residues. The interval 145-173 (GSGKGKGGGKGGKGGKGGTYKPSHYGGGY) is disordered.

This chain is Eggshell protein, found in Schistosoma mansoni (Blood fluke).